Reading from the N-terminus, the 1018-residue chain is MATTSRRPVLTRTKVLVPVLLVIVLAITIIAIFTRLYTDLLFYRSIDFSRVFTTVLYTRILLFVLFGVVMAIIVGTNIVLAYRLRPPLRPLSTEQQNLERYRSVIEPYMLLILLAVTTLFGLAAGLSAAGQWRTWLLWVNGESFGTPDLQFHRDISYYAFSYPFQRFLLGFLLTAVLLSLLVTLLTHYLFGGIRMQTTGERVTPAAKAHISVLLGLLALLKAWAYYLDRFGSVFSSRGVGTGASYTDVHAVLPAKLILLFISLACAVLFIYNIFQRGWTLPLLGAGILVLSSVVIGGIYPAIVQQFQVRPNEATREEPYIARNIAATRAAYGIQDVEPQDYAASTDVTAQQVAADTGTVPNIRLLDPSKLSRTFQQLQQFRGYYGFPPTLDVDRYTVTGADKKSTTQDYVVSVRELNQAGLGTQQRNWINEHLTYTHGKGFVAAPSNTVDVGRPDFDHGVSGFPQDGTFGIKENRVYFGEMSPSYSIVGTRQMEIDGPGPGETQVTTTYQGDGGVSIGSTFRRALFALRFGEKNILLSGDITKNSRILDERNPRDRVSKAAPWLTLDGDPYPAIVNGRVTWILDGYTTSDGYPYSARRTLGDVTADSVTTQSGNRTRQASNQVNYIRNSVKATVDAYNGTVTLYAWDESDPVLRTWMKAFPDTVKPKSDIPPSLRAHLRYPEDLFKVQRDLIGQYHISNPRDFYSQEDFWDVSDSPDGSGQPQPPFYVYSQLPGRKDPSYNLTSPLISARSSKLAAYMAVSSDPANYGRFTLLKLPAGNTINGPVQVQNAIEGNGDVAKQLSLWRSGGATTIEGNLLTLPLAGGLLYVEPYYVQARGSTGYPTLQGVATAFGDRIGFGASLGEALDKVFGAGAGAAAAGAGIGATTTDAGQDGTPAPRSGQGGAGVPPPGQTALQDAVGDADRAYQAGQDALRKSPPDFTAYGKAQSELADALGRLRTLSSPAATPPAATATRAGASVPASPVPASPAAKPPAPSPSATVAGGDTPGPPGARAAPAPG.

Helical transmembrane passes span 13 to 33, 60 to 80, 109 to 129, 167 to 187, 208 to 228, 250 to 270, and 283 to 303; these read TKVLVPVLLVIVLAITIIAIF, ILLFVLFGVVMAIIVGTNIVL, MLLILLAVTTLFGLAAGLSAA, FLLGFLLTAVLLSLLVTLLTH, AHISVLLGLLALLKAWAYYLD, AVLPAKLILLFISLACAVLFI, and LGAGILVLSSVVIGGIYPAIV. 2 stretches are compositionally biased toward low complexity: residues 886-896 and 960-980; these read TTDAGQDGTPA and SSPAATPPAATATRAGASVPA. 2 disordered regions span residues 886–920 and 960–1018; these read TTDAGQDGTPAPRSGQGGAGVPPPGQTALQDAVGD and SSPA…PAPG. Pro residues predominate over residues 981–995; sequence SPVPASPAAKPPAPS.

Belongs to the UPF0182 family.

It is found in the cell membrane. This Frankia casuarinae (strain DSM 45818 / CECT 9043 / HFP020203 / CcI3) protein is UPF0182 protein Francci3_3781.